The sequence spans 151 residues: Large ribosomal subunit protein bL9 (151 aa).

This sequence belongs to the bacterial ribosomal protein bL9 family.

Binds to the 23S rRNA. The protein is Large ribosomal subunit protein bL9 of Dehalococcoides mccartyi (strain ATCC BAA-2266 / KCTC 15142 / 195) (Dehalococcoides ethenogenes (strain 195)).